Consider the following 155-residue polypeptide: Transcriptional repressor NrdR (155 aa).

A zinc finger lies at 3–34 (CPYCGHLEDRVVDSRETQDGQATRRRRACLSC). The ATP-cone domain maps to 49–139 (PQVVKKDGRR…VYRAFRDVGE (91 aa)).

Belongs to the NrdR family. Requires Zn(2+) as cofactor.

Its function is as follows. Negatively regulates transcription of bacterial ribonucleotide reductase nrd genes and operons by binding to NrdR-boxes. This chain is Transcriptional repressor NrdR, found in Anaeromyxobacter dehalogenans (strain 2CP-1 / ATCC BAA-258).